A 171-amino-acid chain; its full sequence is Peptide methionine sulfoxide reductase MsrA (171 aa).

Cysteine 13 is a catalytic residue.

This sequence belongs to the MsrA Met sulfoxide reductase family.

The enzyme catalyses L-methionyl-[protein] + [thioredoxin]-disulfide + H2O = L-methionyl-(S)-S-oxide-[protein] + [thioredoxin]-dithiol. The catalysed reaction is [thioredoxin]-disulfide + L-methionine + H2O = L-methionine (S)-S-oxide + [thioredoxin]-dithiol. In terms of biological role, has an important function as a repair enzyme for proteins that have been inactivated by oxidation. Catalyzes the reversible oxidation-reduction of methionine sulfoxide in proteins to methionine. The protein is Peptide methionine sulfoxide reductase MsrA of Mycobacterium sp. (strain MCS).